A 93-amino-acid polypeptide reads, in one-letter code: Small ribosomal subunit protein uS19 (93 aa).

The protein belongs to the universal ribosomal protein uS19 family.

In terms of biological role, protein S19 forms a complex with S13 that binds strongly to the 16S ribosomal RNA. This is Small ribosomal subunit protein uS19 from Nautilia profundicola (strain ATCC BAA-1463 / DSM 18972 / AmH).